A 771-amino-acid polypeptide reads, in one-letter code: Protein translocase subunit SecA 2 (771 aa).

ATP contacts are provided by residues Q91, 109-113, and D496; that span reads GEGKT.

Belongs to the SecA family. As to quaternary structure, monomer and homodimer. Part of the essential Sec protein translocation apparatus which comprises SecA, SecYEG and auxiliary proteins SecDF. Other proteins may also be involved.

The protein localises to the cell membrane. It localises to the cytoplasm. It catalyses the reaction ATP + H2O + cellular proteinSide 1 = ADP + phosphate + cellular proteinSide 2.. Part of the Sec protein translocase complex. Interacts with the SecYEG preprotein conducting channel. Has a central role in coupling the hydrolysis of ATP to the transfer of proteins into and across the cell membrane, serving as an ATP-driven molecular motor driving the stepwise translocation of polypeptide chains across the membrane. This Corynebacterium jeikeium (strain K411) protein is Protein translocase subunit SecA 2.